A 196-amino-acid chain; its full sequence is 3-isopropylmalate dehydratase small subunit (196 aa).

It belongs to the LeuD family. LeuD type 1 subfamily. As to quaternary structure, heterodimer of LeuC and LeuD.

The catalysed reaction is (2R,3S)-3-isopropylmalate = (2S)-2-isopropylmalate. The protein operates within amino-acid biosynthesis; L-leucine biosynthesis; L-leucine from 3-methyl-2-oxobutanoate: step 2/4. Its function is as follows. Catalyzes the isomerization between 2-isopropylmalate and 3-isopropylmalate, via the formation of 2-isopropylmaleate. The protein is 3-isopropylmalate dehydratase small subunit of Corynebacterium efficiens (strain DSM 44549 / YS-314 / AJ 12310 / JCM 11189 / NBRC 100395).